The sequence spans 185 residues: Large ribosomal subunit protein uL5 (185 aa).

The protein belongs to the universal ribosomal protein uL5 family. In terms of assembly, part of the 50S ribosomal subunit; part of the 5S rRNA/L5/L18/L25 subcomplex. Contacts the 5S rRNA and the P site tRNA. Forms a bridge to the 30S subunit in the 70S ribosome.

This is one of the proteins that bind and probably mediate the attachment of the 5S RNA into the large ribosomal subunit, where it forms part of the central protuberance. In the 70S ribosome it contacts protein S13 of the 30S subunit (bridge B1b), connecting the 2 subunits; this bridge is implicated in subunit movement. Contacts the P site tRNA; the 5S rRNA and some of its associated proteins might help stabilize positioning of ribosome-bound tRNAs. The chain is Large ribosomal subunit protein uL5 from Caulobacter vibrioides (strain NA1000 / CB15N) (Caulobacter crescentus).